Consider the following 280-residue polypeptide: Protein scylla (280 aa).

The segment at Leu-39 to Ser-96 is disordered. Low complexity-rich tracts occupy residues Thr-46–Ser-69 and Gly-77–Ser-96.

The protein belongs to the DDIT4 family.

The protein resides in the cytoplasm. Functionally, inhibits cell growth by regulating the Tor pathway upstream of the Tsc1-Tsc2 complex and downstream of Akt1. Acts as a cell death activator during head development. The sequence is that of Protein scylla (scyl) from Drosophila melanogaster (Fruit fly).